The sequence spans 99 residues: Putative membrane protein insertion efficiency factor (99 aa).

The protein belongs to the UPF0161 family.

It localises to the cell membrane. In terms of biological role, could be involved in insertion of integral membrane proteins into the membrane. In Corynebacterium efficiens (strain DSM 44549 / YS-314 / AJ 12310 / JCM 11189 / NBRC 100395), this protein is Putative membrane protein insertion efficiency factor.